A 381-amino-acid polypeptide reads, in one-letter code: Homoserine O-succinyltransferase (381 aa).

In terms of domain architecture, AB hydrolase-1 spans N45 to D360. S151 functions as the Nucleophile in the catalytic mechanism. R221 contacts substrate. Active-site residues include D321 and H354. Position 355 (D355) interacts with substrate.

The protein belongs to the AB hydrolase superfamily. MetX family. Homodimer.

Its subcellular location is the cytoplasm. It carries out the reaction L-homoserine + succinyl-CoA = O-succinyl-L-homoserine + CoA. Its pathway is amino-acid biosynthesis; L-methionine biosynthesis via de novo pathway; O-succinyl-L-homoserine from L-homoserine: step 1/1. Transfers a succinyl group from succinyl-CoA to L-homoserine, forming succinyl-L-homoserine. This Burkholderia pseudomallei (strain 1710b) protein is Homoserine O-succinyltransferase.